Reading from the N-terminus, the 572-residue chain is Phosphoenolpyruvate-protein phosphotransferase (572 aa).

The active-site Tele-phosphohistidine intermediate is the His-190. The phosphoenolpyruvate site is built by Arg-297 and Arg-333. Residues Glu-432 and Asp-456 each coordinate Mg(2+). Phosphoenolpyruvate-binding positions include 455–456 (ND) and Arg-466. The active-site Proton donor is Cys-503.

The protein belongs to the PEP-utilizing enzyme family. In terms of assembly, homodimer. Requires Mg(2+) as cofactor.

Its subcellular location is the cytoplasm. It carries out the reaction L-histidyl-[protein] + phosphoenolpyruvate = N(pros)-phospho-L-histidyl-[protein] + pyruvate. General (non sugar-specific) component of the phosphoenolpyruvate-dependent sugar phosphotransferase system (sugar PTS). This major carbohydrate active-transport system catalyzes the phosphorylation of incoming sugar substrates concomitantly with their translocation across the cell membrane. Enzyme I transfers the phosphoryl group from phosphoenolpyruvate (PEP) to the phosphoryl carrier protein (HPr). The protein is Phosphoenolpyruvate-protein phosphotransferase (ptsI) of Listeria monocytogenes serovar 1/2a (strain ATCC BAA-679 / EGD-e).